Reading from the N-terminus, the 56-residue chain is GSICLEPKVVGPCTAYFRRFYYDSETGKCTPFIHGGCEGNGNNFETLRACRAICRA.

The BPTI/Kunitz inhibitor domain occupies 4-54 (CLEPKVVGPCTAYFRRFYYDSETGKCTPFIHGGCEGNGNNFETLRACRAIC). Cystine bridges form between C4–C54, C13–C37, and C29–C50.

Belongs to the venom Kunitz-type family. Sea anemone type 2 potassium channel toxin subfamily.

It localises to the secreted. Its subcellular location is the nematocyst. Functionally, this recombinant serine protease inhibitor inhibits trypsin (Ki=100 nM). It may also inhibit the TRPV1 receptor of the pain pathway. It possesses anti-inflammatory activity in vitro. It blocks histamine influence on intracellular calcium concentration in murine bone marrow-derived macrophages (84% inhibition at 10 uM and 67.2% at 1 uM), which can indicate inhibition of H1-histamine receptor (HRH1). In vitro, it shows cytoprotective activity in the oxidative stress agent 6-hydroxydopamine (6-OHDA)-induced neurotoxicity model. In this model, it decreases reactive oxygen species (ROS) level, and increases cell viability in a correlated manner. In vivo, it shows analgesic activity, since it increases hot plate and tail flick withdrawal latencies, when using a mice thermal pain stimulation model. The protein is PI-stichotoxin-Hcr2p of Radianthus crispa (Leathery sea anemone).